Consider the following 454-residue polypeptide: GA-binding protein alpha chain (454 aa).

A PNT domain is found at 168 to 251 (AALEGYRKEQ…SHLELLRKYV (84 aa)). The tract at residues 295–316 (KVQRSPRISGEDRSSPGNRTGN) is disordered. S303 is subject to Phosphoserine. The segment at residues 320-400 (IQLWQFLLEL…QGKRFVYKFV (81 aa)) is a DNA-binding region (ETS).

Belongs to the ETS family. Heterotetramer of two alpha and two beta subunits. Ubiquitous.

The protein localises to the nucleus. Transcription factor capable of interacting with purine rich repeats (GA repeats). Positively regulates transcription of transcriptional repressor Rhit/Zpf13. The sequence is that of GA-binding protein alpha chain (Gabpa) from Mus musculus (Mouse).